The primary structure comprises 510 residues: ATP-dependent zinc metalloprotease FtsH 2 (510 aa).

At 1-4 (MKKN) the chain is on the cytoplasmic side. Residues 5–25 (LHIIILALSIFINLLFIYIFI) traverse the membrane as a helical segment. At 26-31 (SEVKPN) the chain is on the extracellular side. A helical membrane pass occupies residues 32–52 (LNLNLSFILTAAVIVVTYLLF). The Cytoplasmic portion of the chain corresponds to 53 to 510 (KNKFSELMPV…LWEEENTLCV (458 aa)). 124–131 (GPPGTGKT) contacts ATP. H343 serves as a coordination point for Zn(2+). E344 is an active-site residue. Zn(2+) is bound by residues H347 and D418.

In the central section; belongs to the AAA ATPase family. It in the C-terminal section; belongs to the peptidase M41 family. Homohexamer. Requires Zn(2+) as cofactor.

Its subcellular location is the cell membrane. Functionally, acts as a processive, ATP-dependent zinc metallopeptidase for both cytoplasmic and membrane proteins. Plays a role in the quality control of integral membrane proteins. The sequence is that of ATP-dependent zinc metalloprotease FtsH 2 from Thermoanaerobacter sp. (strain X514).